A 1252-amino-acid polypeptide reads, in one-letter code: Guanine nucleotide exchange factor SDC25 (1252 aa).

The SH3 domain occupies 26–97; sequence QPIDVVECTY…PPSFTRSILN (72 aa). Disordered stretches follow at residues 409–454 and 623–648; these read IPAS…DTIW and LNLD…DEYE. The segment covering 416–428 has biased composition (low complexity); that stretch reads TSCSSETSHHSPS. Residues 782-914 form the N-terminal Ras-GEF domain; the sequence is SNNRIKGGSK…LLKEVNQKFK (133 aa). The region spanning 952-1199 is the Ras-GEF domain; the sequence is DPVLFATQLT…YQLSLIIEPK (248 aa). Residues 1201–1252 form a disordered region; the sequence is RKKVVPNSNSNNKSQEKSRDDQTDEGKTSTKKDRFSKFQLHKTKKKAPKVSK. Positions 1214 to 1236 are enriched in basic and acidic residues; that stretch reads SQEKSRDDQTDEGKTSTKKDRFS. Positions 1239-1252 are enriched in basic residues; it reads QLHKTKKKAPKVSK.

In terms of biological role, promotes the exchange of Ras-bound GDP by GTP. The sequence is that of Guanine nucleotide exchange factor SDC25 (SDC25) from Saccharomyces cerevisiae (strain RM11-1a) (Baker's yeast).